The chain runs to 392 residues: Formate-dependent phosphoribosylglycinamide formyltransferase (392 aa).

Residues 22–23 and glutamate 82 contribute to the N(1)-(5-phospho-beta-D-ribosyl)glycinamide site; that span reads EL. ATP is bound by residues arginine 114, lysine 155, 160-165, 195-198, and glutamate 203; these read SSGKGQ and EGVV. Residues 119-308 form the ATP-grasp domain; it reads RLAAEELGLP…EFALHVRAFL (190 aa). Positions 267 and 279 each coordinate Mg(2+). Residues aspartate 286, lysine 355, and 362–363 contribute to the N(1)-(5-phospho-beta-D-ribosyl)glycinamide site; that span reads RR.

This sequence belongs to the PurK/PurT family. Homodimer.

The enzyme catalyses N(1)-(5-phospho-beta-D-ribosyl)glycinamide + formate + ATP = N(2)-formyl-N(1)-(5-phospho-beta-D-ribosyl)glycinamide + ADP + phosphate + H(+). The protein operates within purine metabolism; IMP biosynthesis via de novo pathway; N(2)-formyl-N(1)-(5-phospho-D-ribosyl)glycinamide from N(1)-(5-phospho-D-ribosyl)glycinamide (formate route): step 1/1. In terms of biological role, involved in the de novo purine biosynthesis. Catalyzes the transfer of formate to 5-phospho-ribosyl-glycinamide (GAR), producing 5-phospho-ribosyl-N-formylglycinamide (FGAR). Formate is provided by PurU via hydrolysis of 10-formyl-tetrahydrofolate. The sequence is that of Formate-dependent phosphoribosylglycinamide formyltransferase from Salmonella paratyphi A (strain ATCC 9150 / SARB42).